The sequence spans 379 residues: Beta sliding clamp (379 aa).

The protein belongs to the beta sliding clamp family. In terms of assembly, forms a ring-shaped head-to-tail homodimer around DNA which binds and tethers DNA polymerases and other proteins to the DNA. The DNA replisome complex has a single clamp-loading complex (3 tau and 1 each of delta, delta', psi and chi subunits) which binds 3 Pol III cores (1 core on the leading strand and 2 on the lagging strand) each with a beta sliding clamp dimer. Additional proteins in the replisome are other copies of gamma, psi and chi, Ssb, DNA helicase and RNA primase.

The protein resides in the cytoplasm. In terms of biological role, confers DNA tethering and processivity to DNA polymerases and other proteins. Acts as a clamp, forming a ring around DNA (a reaction catalyzed by the clamp-loading complex) which diffuses in an ATP-independent manner freely and bidirectionally along dsDNA. Initially characterized for its ability to contact the catalytic subunit of DNA polymerase III (Pol III), a complex, multichain enzyme responsible for most of the replicative synthesis in bacteria; Pol III exhibits 3'-5' exonuclease proofreading activity. The beta chain is required for initiation of replication as well as for processivity of DNA replication. This is Beta sliding clamp (dnaN) from Rickettsia felis (strain ATCC VR-1525 / URRWXCal2) (Rickettsia azadi).